Consider the following 189-residue polypeptide: Probable hydrogen peroxide-inducible genes activator (189 aa).

Residues 8-65 (PTLAGLRAFAAVAEKQHFGSAASALGVNQSTLSQALAGLESGLGVRLIERSTRRVFLT) enclose the HTH lysR-type domain. Positions 25 to 44 (FGSAASALGVNQSTLSQALA) form a DNA-binding region, H-T-H motif.

The protein belongs to the LysR transcriptional regulatory family.

Required for the induction the katG gene for catalase. Involved in the response to hydrogen peroxide. This is Probable hydrogen peroxide-inducible genes activator (oxyR) from Mycobacterium xenopi.